A 543-amino-acid polypeptide reads, in one-letter code: Zinc finger protein 34 (543 aa).

Residues 14–87 (VTFEDVAVFL…DMHGAEQPSV (74 aa)) enclose the KRAB domain. The tract at residues 84-151 (QPSVDGSAHG…PGEQRGPRLV (68 aa)) is disordered. Residues 124–147 (EPGEVHERVREPEGRLDRPGEQRG) show a composition bias toward basic and acidic residues. 12 C2H2-type zinc fingers span residues 179–201 (HKCDICEQSFEQRSYLNNHKRVH), 234–256 (YYCGCCGKAFRYSANLVKHQRLH), 262–284 (YKCEECGKAFHQSCELISHRRMH), 290–312 (YRCDECGKTFNQRPNLMKHQRIH), 318–340 (YKCSECGKHFSAYSSLIYHQRIH), 346–368 (YKCSDCGKAFSDGSILIRHRRTH), 374–396 (YECKECGKGFTQSSNLIQHQRIH), 402–424 (YKCNECEKAFIQKTKLVEHQRSH), 430–452 (YECNDCGKVFSQSTHLIQHQRIH), 458–480 (YKCSECGKAFHNSSRLIHHQRSH), 486–508 (YKCADCKKAFSQGTYLLQHRRIH), and 514–536 (YTCGECGKAFRHSSNMSQHQRIH).

It belongs to the krueppel C2H2-type zinc-finger protein family.

The protein localises to the nucleus. Its function is as follows. May be involved in transcriptional regulation. This chain is Zinc finger protein 34 (ZNF34), found in Bos taurus (Bovine).